The chain runs to 165 residues: NADPH-dependent 7-cyano-7-deazaguanine reductase (165 aa).

Catalysis depends on Cys56, which acts as the Thioimide intermediate. The Proton donor role is filled by Asp63. Residues 78–80 (VES) and 97–98 (HE) contribute to the substrate site.

This sequence belongs to the GTP cyclohydrolase I family. QueF type 1 subfamily.

The protein localises to the cytoplasm. The catalysed reaction is 7-aminomethyl-7-carbaguanine + 2 NADP(+) = 7-cyano-7-deazaguanine + 2 NADPH + 3 H(+). Its pathway is tRNA modification; tRNA-queuosine biosynthesis. In terms of biological role, catalyzes the NADPH-dependent reduction of 7-cyano-7-deazaguanine (preQ0) to 7-aminomethyl-7-deazaguanine (preQ1). The chain is NADPH-dependent 7-cyano-7-deazaguanine reductase from Bacillus cereus (strain ATCC 14579 / DSM 31 / CCUG 7414 / JCM 2152 / NBRC 15305 / NCIMB 9373 / NCTC 2599 / NRRL B-3711).